We begin with the raw amino-acid sequence, 276 residues long: Putative translation initiation factor eIF-2B subunit 2-like (276 aa).

The protein belongs to the eIF-2B alpha/beta/delta subunits family. Complex of two different subunits.

Catalyzes the exchange of initiation factor 2-bound GDP for GTP. The polypeptide is Putative translation initiation factor eIF-2B subunit 2-like (Pyrococcus furiosus (strain ATCC 43587 / DSM 3638 / JCM 8422 / Vc1)).